The chain runs to 254 residues: Putative electron transfer flavoprotein subunit YdiQ (254 aa).

This sequence belongs to the ETF beta-subunit/FixA family. YdiR and YdiQ form a heterodimer.

May play a role in a redox process. This is Putative electron transfer flavoprotein subunit YdiQ (ydiQ) from Escherichia coli (strain K12).